The primary structure comprises 110 residues: UPF0060 membrane protein Psyr_3752 (110 aa).

4 consecutive transmembrane segments (helical) span residues 5–25, 28–48, 59–79, and 84–104; these read LWFFLAALFEIFGCYAFWLWL, GKSALWVIPALVSLTVFALLL, AYAAYGGIYIVASIAWLGLVE, and LGTDWLGLAFCVIGATIILLG.

Belongs to the UPF0060 family.

It localises to the cell inner membrane. The sequence is that of UPF0060 membrane protein Psyr_3752 from Pseudomonas syringae pv. syringae (strain B728a).